Consider the following 326-residue polypeptide: Pantothenate kinase (326 aa).

104–111 (GSVAVGKS) is an ATP binding site.

Belongs to the prokaryotic pantothenate kinase family.

Its subcellular location is the cytoplasm. The enzyme catalyses (R)-pantothenate + ATP = (R)-4'-phosphopantothenate + ADP + H(+). It participates in cofactor biosynthesis; coenzyme A biosynthesis; CoA from (R)-pantothenate: step 1/5. This chain is Pantothenate kinase, found in Parvibaculum lavamentivorans (strain DS-1 / DSM 13023 / NCIMB 13966).